A 272-amino-acid chain; its full sequence is Phosphate import ATP-binding protein PstB (272 aa).

The ABC transporter domain occupies 26 to 267 (IVVKNWNLYY…PQVKRTEDYI (242 aa)). An ATP-binding site is contributed by 58 to 65 (GPSGCGKS).

This sequence belongs to the ABC transporter superfamily. Phosphate importer (TC 3.A.1.7) family. As to quaternary structure, the complex is composed of two ATP-binding proteins (PstB), two transmembrane proteins (PstC and PstA) and a solute-binding protein (PstS).

The protein resides in the cell inner membrane. The catalysed reaction is phosphate(out) + ATP + H2O = ADP + 2 phosphate(in) + H(+). In terms of biological role, part of the ABC transporter complex PstSACB involved in phosphate import. Responsible for energy coupling to the transport system. The sequence is that of Phosphate import ATP-binding protein PstB from Hydrogenovibrio crunogenus (strain DSM 25203 / XCL-2) (Thiomicrospira crunogena).